We begin with the raw amino-acid sequence, 370 residues long: Pulmonary surfactant-associated protein B (370 aa).

A signal peptide spans 1–24 (MAKSHLPPWLLLLLLPTLCGPGTA). A propeptide spanning residues 25 to 184 (VWATSPLACA…PHTQDLSAQR (160 aa)) is cleaved from the precursor. Residues 26-66 (WATSPLACAQGPEFWCQSLEQALQCKALGHCLQEVWGHVGA) enclose the Saposin A-type domain. Saposin B-type domains lie at 66–148 (ADDL…QPGS), 188–265 (PLPL…SSVD), and 284–359 (QDPE…VATL). Cystine bridges form between cysteine 70–cysteine 144, cysteine 73–cysteine 138, cysteine 101–cysteine 113, cysteine 192–cysteine 261, cysteine 195–cysteine 255, cysteine 219–cysteine 230, cysteine 288–cysteine 355, cysteine 291–cysteine 349, and cysteine 314–cysteine 324. Positions 264 to 370 (VDSIGQVPPT…PLQCIQSPHF (107 aa)) are excised as a propeptide. A glycan (N-linked (GlcNAc...) asparagine) is linked at asparagine 300.

Homodimer; disulfide-linked.

It is found in the secreted. The protein resides in the extracellular space. Its subcellular location is the surface film. Pulmonary surfactant-associated proteins promote alveolar stability by lowering the surface tension at the air-liquid interface in the peripheral air spaces. SP-B increases the collapse pressure of palmitic acid to nearly 70 millinewtons per meter. This chain is Pulmonary surfactant-associated protein B (SFTPB), found in Oryctolagus cuniculus (Rabbit).